Reading from the N-terminus, the 122-residue chain is Flagellar protein FliT (122 aa).

Residues methionine 1–lysine 50 form a required for homodimerization region. The fliD binding stretch occupies residues isoleucine 60–arginine 98.

Belongs to the FliT family. In terms of assembly, homodimer. Interacts with FliD and FlhC.

It is found in the cytoplasm. The protein localises to the cytosol. Its function is as follows. Dual-function protein that regulates the transcription of class 2 flagellar operons and that also acts as an export chaperone for the filament-capping protein FliD. As a transcriptional regulator, acts as an anti-FlhDC factor; it directly binds FlhC, thus inhibiting the binding of the FlhC/FlhD complex to class 2 promoters, resulting in decreased expression of class 2 flagellar operons. As a chaperone, effects FliD transition to the membrane by preventing its premature polymerization, and by directing it to the export apparatus. The chain is Flagellar protein FliT from Salmonella gallinarum (strain 287/91 / NCTC 13346).